A 224-amino-acid polypeptide reads, in one-letter code: Response regulator protein GraR (224 aa).

One can recognise a Response regulatory domain in the interval 2-115; that stretch reads QILLVEDDNT…VLIAKLQAIY (114 aa). Residue Asp-51 is modified to 4-aspartylphosphate. The segment at residues 126-224 is a DNA-binding region (ompR/PhoB-type); that stretch reads KRTLTWQDAV…KVGKGYMAHE (99 aa). Thr-128, Thr-130, and Thr-149 each carry phosphothreonine.

In terms of assembly, interacts with GraX. In terms of processing, phosphorylated by GraS. Phosphorylated by Stk1; phosphorylation increases the DNA-binding activity of GraR.

It localises to the cytoplasm. Its function is as follows. Member of the two-component regulatory system GraR/GraS involved in resistance against cationic antimicrobial peptides (CAMPs). Upon phosphorylation by GraS, functions as a transcription regulator by direct binding to promoter regions of target genes such as adhesins, exoproteins, transporters, toxins, and proteins involved in cell wall synthesis. Down-regulates the expression of many genes involved in RNA and amino acid synthesis or glycolysis. The sequence is that of Response regulator protein GraR (graR) from Staphylococcus aureus (strain Mu50 / ATCC 700699).